The sequence spans 595 residues: Elongation factor 4 (595 aa).

A tr-type G domain is found at 2–183; it reads KNIRNFCIIA…AIIERISPPT (182 aa). Residues 14–19 and 130–133 each bind GTP; these read DHGKST and NKID.

This sequence belongs to the TRAFAC class translation factor GTPase superfamily. Classic translation factor GTPase family. LepA subfamily.

It localises to the cell inner membrane. It catalyses the reaction GTP + H2O = GDP + phosphate + H(+). Functionally, required for accurate and efficient protein synthesis under certain stress conditions. May act as a fidelity factor of the translation reaction, by catalyzing a one-codon backward translocation of tRNAs on improperly translocated ribosomes. Back-translocation proceeds from a post-translocation (POST) complex to a pre-translocation (PRE) complex, thus giving elongation factor G a second chance to translocate the tRNAs correctly. Binds to ribosomes in a GTP-dependent manner. The protein is Elongation factor 4 of Amoebophilus asiaticus (strain 5a2).